The chain runs to 285 residues: Ribosomal RNA small subunit methyltransferase I (285 aa).

This sequence belongs to the methyltransferase superfamily. RsmI family.

It localises to the cytoplasm. It catalyses the reaction cytidine(1402) in 16S rRNA + S-adenosyl-L-methionine = 2'-O-methylcytidine(1402) in 16S rRNA + S-adenosyl-L-homocysteine + H(+). In terms of biological role, catalyzes the 2'-O-methylation of the ribose of cytidine 1402 (C1402) in 16S rRNA. The chain is Ribosomal RNA small subunit methyltransferase I from Mycobacterium tuberculosis (strain CDC 1551 / Oshkosh).